The primary structure comprises 130 residues: S-protein homolog 22 (130 aa).

The N-terminal stretch at 1-21 (MKYFTIFFIFFSLCMFGHVSG) is a signal peptide.

It belongs to the plant self-incompatibility (S1) protein family.

Its subcellular location is the secreted. In Arabidopsis thaliana (Mouse-ear cress), this protein is S-protein homolog 22.